Consider the following 67-residue polypeptide: Large ribosomal subunit protein bL32 (67 aa).

Basic residues predominate over residues 1-19 (MAVPKRKMSRSNTRARRSQ). Residues 1–21 (MAVPKRKMSRSNTRARRSQWK) are disordered.

The protein belongs to the bacterial ribosomal protein bL32 family.

The sequence is that of Large ribosomal subunit protein bL32 from Clavibacter michiganensis subsp. michiganensis (strain NCPPB 382).